Reading from the N-terminus, the 290-residue chain is Small ribosomal subunit biogenesis GTPase RsgA (290 aa).

Positions 62–219 (RTCLKRPAVA…VADTPGFSRL (158 aa)) constitute a CP-type G domain. GTP contacts are provided by residues 111 to 114 (NKAD) and 161 to 169 (GPSGVGKSS). 4 residues coordinate Zn(2+): Cys243, Cys248, His250, and Cys256.

Belongs to the TRAFAC class YlqF/YawG GTPase family. RsgA subfamily. In terms of assembly, monomer. Associates with 30S ribosomal subunit, binds 16S rRNA. Requires Zn(2+) as cofactor.

The protein localises to the cytoplasm. In terms of biological role, one of several proteins that assist in the late maturation steps of the functional core of the 30S ribosomal subunit. Helps release RbfA from mature subunits. May play a role in the assembly of ribosomal proteins into the subunit. Circularly permuted GTPase that catalyzes slow GTP hydrolysis, GTPase activity is stimulated by the 30S ribosomal subunit. This is Small ribosomal subunit biogenesis GTPase RsgA from Moorella thermoacetica (strain ATCC 39073 / JCM 9320).